We begin with the raw amino-acid sequence, 441 residues long: Chromosomal replication initiator protein DnaA (441 aa).

Residues 1–71 (MDIRWEEILE…AVYQVVGDRF (71 aa)) are domain I, interacts with DnaA modulators. Residues 71–99 (FKVSILTESETSSHVLKEVIQSKFDDSDS) are domain II. Positions 100–318 (DLNPEYIFSN…GIVNDLVMYK (219 aa)) are domain III, AAA+ region. Gly-143, Gly-145, Lys-146, and Thr-147 together coordinate ATP. The domain IV, binds dsDNA stretch occupies residues 319–441 (KAYEYFLLTE…HTIKHKISFQ (123 aa)).

It belongs to the DnaA family. Oligomerizes as a right-handed, spiral filament on DNA at oriC.

Its subcellular location is the cytoplasm. Plays an essential role in the initiation and regulation of chromosomal replication. ATP-DnaA binds to the origin of replication (oriC) to initiate formation of the DNA replication initiation complex once per cell cycle. Binds the DnaA box (a 9 base pair repeat at the origin) and separates the double-stranded (ds)DNA. Forms a right-handed helical filament on oriC DNA; dsDNA binds to the exterior of the filament while single-stranded (ss)DNA is stabiized in the filament's interior. The ATP-DnaA-oriC complex binds and stabilizes one strand of the AT-rich DNA unwinding element (DUE), permitting loading of DNA polymerase. After initiation quickly degrades to an ADP-DnaA complex that is not apt for DNA replication. Binds acidic phospholipids. The sequence is that of Chromosomal replication initiator protein DnaA from Leptospira biflexa serovar Patoc (strain Patoc 1 / Ames).